We begin with the raw amino-acid sequence, 694 residues long: Follicle-stimulating hormone receptor (694 aa).

The first 17 residues, 1-17 (MAFLWISFLVFLGSGSG), serve as a signal peptide directing secretion. 2 disulfides stabilise this stretch: cysteine 18/cysteine 25 and cysteine 23/cysteine 32. The LRRNT domain occupies 18-46 (CHHRICHCSDRVFICQESKVTEIPSDIPR). At 18–367 (CHHRICHCSD…EDIMGYNFLR (350 aa)) the chain is on the extracellular side. LRR repeat units follow at residues 49-72 (VEMRFVLTKLQVIPRGAFSGFRDL), 73-97 (EKIEISQNDALEVIEADVFSNLPKL), 98-118 (HEIRIEKANNLVLIDPEAFWN), 119-143 (LPNLRYLLISNTGIKHLPAVYKIQS), 144-169 (HQKVLLDIQDNINIRTIERNSFAGLS), 170-192 (SESEILWLNKNGIQEIQNQAFNG), 193-216 (TQLDELNLSDNINLEDLPNGIFQG), 217-240 (ANGPVILDISRTRIHSLPSDGLKN), and 241-259 (LKKLKARSAYNFKTLPNLD). Asparagine 191 and asparagine 199 each carry an N-linked (GlcNAc...) asparagine glycan. An N-linked (GlcNAc...) asparagine glycan is attached at asparagine 268. Intrachain disulfides connect cysteine 275–cysteine 347, cysteine 276–cysteine 292, cysteine 276–cysteine 357, and cysteine 292–cysteine 339. The N-linked (GlcNAc...) asparagine glycan is linked to asparagine 293. Tyrosine 336 carries the post-translational modification Sulfotyrosine. Residues 368-388 (VLIWFISILSITGNIVVLVIL) traverse the membrane as a helical segment. At 389 to 399 (ITSQYKLTVPR) the chain is on the cytoplasmic side. A helical membrane pass occupies residues 400–422 (FLMCNLAFADLCIGIYLLLIASV). Topologically, residues 423-444 (DIHTKSQYHNYAIDWQTGAGCD) are extracellular. A disulfide bridge connects residues cysteine 443 and cysteine 518. A helical transmembrane segment spans residues 445–466 (AAGFFTVFASELSVYTLTAITL). The Cytoplasmic portion of the chain corresponds to 467–486 (ERWHTITYAMQLDRKVRLRH). A helical membrane pass occupies residues 487 to 509 (AASIMLIGWIFAFSVALLPIFGV). Residues 510-529 (SSYMKVSICLPMDIDSPLSQ) lie on the Extracellular side of the membrane. Residues 530–551 (FYVISLLVLNVLASVIICTCYT) form a helical membrane-spanning segment. Residues 552-574 (HIYFTVRNPNIISSTSDAKIAKR) are Cytoplasmic-facing. A helical transmembrane segment spans residues 575-598 (MAMLIFTDFLCMAPISFFAISASV). The Extracellular portion of the chain corresponds to 599-609 (KMPLITVSKSK). The chain crosses the membrane as a helical span at residues 610–631 (ILLVLFYPINSCANPFLYAVFT). Over 632 to 694 (KTFRRDFFIL…YKLVPLNHLS (63 aa)) the chain is Cytoplasmic.

It belongs to the G-protein coupled receptor 1 family. FSH/LSH/TSH subfamily. Homotrimer. Functions as a homotrimer binding the FSH hormone heterodimer composed of CGA and FSHB. Interacts with ARRB2. Interacts with APPL2; interaction is independent of follicle stimulating hormone stimulation. In terms of processing, N-glycosylated; indirectly required for FSH-binding, possibly via a conformational change that allows high affinity binding of hormone. Sulfated.

It localises to the cell membrane. In terms of biological role, g protein-coupled receptor for follitropin, the follicle-stimulating hormone. Through cAMP production activates the downstream PI3K-AKT and ERK1/ERK2 signaling pathways. The polypeptide is Follicle-stimulating hormone receptor (FSHR) (Notamacropus eugenii (Tammar wallaby)).